The sequence spans 367 residues: Peptide chain release factor 2 (367 aa).

Glutamine 254 is subject to N5-methylglutamine.

Belongs to the prokaryotic/mitochondrial release factor family. In terms of processing, methylated by PrmC. Methylation increases the termination efficiency of RF2.

The protein resides in the cytoplasm. In terms of biological role, peptide chain release factor 2 directs the termination of translation in response to the peptide chain termination codons UGA and UAA. This chain is Peptide chain release factor 2, found in Neisseria gonorrhoeae (strain ATCC 700825 / FA 1090).